A 476-amino-acid polypeptide reads, in one-letter code: MRIYNTATRQLEEFVTYTPRLARGYVCGITPYDSVHVGHGRVYVFFDMFRRYLEAQGYEVRLVINFTDIDDKIINRAREEFGAEAYKRWREVPERYIAEFFEMSKRLFIKPAYAYPKVTENVEDMVSWIKALVEKGYAYTAPDGSVYFEVGKVPNYGVLSRQRIEELMAGARVEPEPGKRNPLDFALWKSWTPGEPWWESPWCPGRPGWHLECVVMSTKHLGVPFDFHGGGADLIFPHHENEIAIAKAYFGVDNFARYWIHVGYLTVRGEKMSKSLGNVVTLREALSKYSGEALRLAYAMSHYRKPMEFSYEVLDQAEEMAKTIYTAYDELGQAVGDAGEEDKEALDYGRYVEEFYAALEDDFSTPQAAQQFYGLARYIISTVLHKIDKISRNTALSILSQYVKMADILGVLERREVPKEVEEAVKAAVEVRAKLRKERQYQLADYIRERLAGIGVELHDFGQRTYYTYRRGNRLR.

Cys-27 serves as a coordination point for Zn(2+). A 'HIGH' region motif is present at residues 29–39 (ITPYDSVHVGH). Positions 213, 238, and 242 each coordinate Zn(2+). The 'KMSKS' region motif lies at 271-275 (KMSKS). Lys-274 serves as a coordination point for ATP.

It belongs to the class-I aminoacyl-tRNA synthetase family. The cofactor is Zn(2+).

Its subcellular location is the cytoplasm. The catalysed reaction is tRNA(Cys) + L-cysteine + ATP = L-cysteinyl-tRNA(Cys) + AMP + diphosphate. This Pyrobaculum arsenaticum (strain DSM 13514 / JCM 11321 / PZ6) protein is Cysteine--tRNA ligase.